A 429-amino-acid chain; its full sequence is ATP-dependent RNA helicase RhlB (429 aa).

The short motif at 9–37 is the Q motif element; that stretch reads EKFAQMGLEPEVLAGLESKGFHYCTPIQA. Positions 40–219 constitute a Helicase ATP-binding domain; it reads LPLLVEGHDL…YEHMNHPEHV (180 aa). 53-60 is an ATP binding site; that stretch reads AQTGTGKT. The short motif at 165–168 is the DEAD box element; that stretch reads DEAD. Residues 243 to 390 form the Helicase C-terminal domain; that stretch reads KMLLLLSLME…VSKYDREALL (148 aa). Residues 395 to 429 are disordered; sequence APKRVVRNRQPVNRNMRDRQGGGNSNNRRRPPRKS.

The protein belongs to the DEAD box helicase family. RhlB subfamily. Component of the RNA degradosome, which is a multiprotein complex involved in RNA processing and mRNA degradation.

It is found in the cytoplasm. It carries out the reaction ATP + H2O = ADP + phosphate + H(+). Its function is as follows. DEAD-box RNA helicase involved in RNA degradation. Has RNA-dependent ATPase activity and unwinds double-stranded RNA. The sequence is that of ATP-dependent RNA helicase RhlB from Aeromonas salmonicida (strain A449).